Reading from the N-terminus, the 606-residue chain is Albumin A (606 aa).

Residues 1–18 (MKWITLICLLISSTLIES) form the signal peptide. Positions 19 to 24 (RIIFKR) are excised as a propeptide. Albumin domains are found at residues 22 to 211 (FKRD…ELMK), 212 to 401 (HSHS…RFMN), and 402 to 599 (EAKE…VLIE). Residue His-30 participates in Cu cation binding. 17 disulfides stabilise this stretch: Cys-80–Cys-89, Cys-102–Cys-118, Cys-117–Cys-128, Cys-148–Cys-193, Cys-192–Cys-201, Cys-224–Cys-270, Cys-269–Cys-277, Cys-289–Cys-303, Cys-302–Cys-313, Cys-340–Cys-383, Cys-382–Cys-391, Cys-414–Cys-460, Cys-459–Cys-470, Cys-483–Cys-499, Cys-498–Cys-509, Cys-536–Cys-581, and Cys-580–Cys-589.

Belongs to the ALB/AFP/VDB family. As to expression, plasma.

Its subcellular location is the secreted. In terms of biological role, binds water, Ca(2+), Na(+), K(+), fatty acids, hormones, bilirubin and drugs. Its main function is the regulation of the colloidal osmotic pressure of blood. The polypeptide is Albumin A (alb-a) (Xenopus laevis (African clawed frog)).